A 181-amino-acid polypeptide reads, in one-letter code: Putative adenylate kinase (181 aa).

The ATP site is built by Gly-10, Gly-12, Lys-13, Ser-14, and Thr-15. An NMP region spans residues 35 to 58 (NITEVVSKNGLYLEKDIEMDSYVV). Positions 106-116 (SRNYSSEKVKE) are LID. 2 residues coordinate ATP: Arg-107 and Lys-147.

The protein belongs to the adenylate kinase family. AK6 subfamily. In terms of assembly, interacts with uS11. Not a structural component of 40S pre-ribosomes, but transiently interacts with them by binding to uS11.

It catalyses the reaction AMP + ATP = 2 ADP. It carries out the reaction ATP + H2O = ADP + phosphate + H(+). In terms of biological role, broad-specificity nucleoside monophosphate (NMP) kinase that catalyzes the reversible transfer of the terminal phosphate group between nucleoside triphosphates and monophosphates. Also has ATPase activity. Involved in the late maturation steps of the 30S ribosomal particles, specifically 16S rRNA maturation. While NMP activity is not required for ribosome maturation, ATPase activity is. Associates transiently with small ribosomal subunit protein uS11. ATP hydrolysis breaks the interaction with uS11. May temporarily remove uS11 from the ribosome to enable a conformational change of the ribosomal RNA that is needed for the final maturation step of the small ribosomal subunit. The protein is Putative adenylate kinase of Methanococcus maripaludis (strain C7 / ATCC BAA-1331).